A 225-amino-acid polypeptide reads, in one-letter code: Holliday junction branch migration complex subunit RuvA (225 aa).

The interval 1 to 71 is domain I; the sequence is MISWINGELV…EDSDLLFGFT (71 aa). The tract at residues 72–150 is domain II; the sequence is SKDQKFFFIE…SKIQIEEEKG (79 aa). The tract at residues 151–161 is flexible linker; the sequence is QEEFEITNPEI. The segment at 161 to 225 is domain III; that stretch reads IYKLMEDLQL…LDQGNSNLAR (65 aa).

This sequence belongs to the RuvA family. Homotetramer. Forms an RuvA(8)-RuvB(12)-Holliday junction (HJ) complex. HJ DNA is sandwiched between 2 RuvA tetramers; dsDNA enters through RuvA and exits via RuvB. An RuvB hexamer assembles on each DNA strand where it exits the tetramer. Each RuvB hexamer is contacted by two RuvA subunits (via domain III) on 2 adjacent RuvB subunits; this complex drives branch migration. In the full resolvosome a probable DNA-RuvA(4)-RuvB(12)-RuvC(2) complex forms which resolves the HJ.

Its subcellular location is the cytoplasm. In terms of biological role, the RuvA-RuvB-RuvC complex processes Holliday junction (HJ) DNA during genetic recombination and DNA repair, while the RuvA-RuvB complex plays an important role in the rescue of blocked DNA replication forks via replication fork reversal (RFR). RuvA specifically binds to HJ cruciform DNA, conferring on it an open structure. The RuvB hexamer acts as an ATP-dependent pump, pulling dsDNA into and through the RuvAB complex. HJ branch migration allows RuvC to scan DNA until it finds its consensus sequence, where it cleaves and resolves the cruciform DNA. This chain is Holliday junction branch migration complex subunit RuvA, found in Prochlorococcus marinus (strain MIT 9215).